A 72-amino-acid chain; its full sequence is Translation initiation factor IF-1 (72 aa).

An S1-like domain is found at Met-1–Lys-72.

The protein belongs to the IF-1 family. Component of the 30S ribosomal translation pre-initiation complex which assembles on the 30S ribosome in the order IF-2 and IF-3, IF-1 and N-formylmethionyl-tRNA(fMet); mRNA recruitment can occur at any time during PIC assembly.

Its subcellular location is the cytoplasm. In terms of biological role, one of the essential components for the initiation of protein synthesis. Stabilizes the binding of IF-2 and IF-3 on the 30S subunit to which N-formylmethionyl-tRNA(fMet) subsequently binds. Helps modulate mRNA selection, yielding the 30S pre-initiation complex (PIC). Upon addition of the 50S ribosomal subunit IF-1, IF-2 and IF-3 are released leaving the mature 70S translation initiation complex. This is Translation initiation factor IF-1 from Syntrophotalea carbinolica (strain DSM 2380 / NBRC 103641 / GraBd1) (Pelobacter carbinolicus).